A 393-amino-acid chain; its full sequence is Elongation factor Tu (393 aa).

Positions 10–203 constitute a tr-type G domain; sequence KPHVNIGTIG…AVDEFIPEPV (194 aa). A G1 region spans residues 19 to 26; it reads GHVDHGKT. Residue 19–26 participates in GTP binding; that stretch reads GHVDHGKT. Threonine 26 is a Mg(2+) binding site. The segment at 60 to 64 is G2; the sequence is GITIS. Positions 81-84 are G3; it reads DCPG. GTP is bound by residues 81 to 85 and 136 to 139; these read DCPGH and NKVD. Residues 136 to 139 form a G4 region; it reads NKVD. The interval 173 to 175 is G5; that stretch reads SAL.

Belongs to the TRAFAC class translation factor GTPase superfamily. Classic translation factor GTPase family. EF-Tu/EF-1A subfamily. As to quaternary structure, monomer.

The protein resides in the cytoplasm. It carries out the reaction GTP + H2O = GDP + phosphate + H(+). Functionally, GTP hydrolase that promotes the GTP-dependent binding of aminoacyl-tRNA to the A-site of ribosomes during protein biosynthesis. This chain is Elongation factor Tu, found in Chlorobium limicola (strain DSM 245 / NBRC 103803 / 6330).